The chain runs to 330 residues: 5'-AMP-activated protein kinase subunit gamma-1 (330 aa).

The tract at residues 1-24 (MEAVPSSDSYPAVENEHLQETPES) is disordered. CBS domains follow at residues 43 to 103 (PTSS…KSAL), 125 to 187 (SFKP…PKPE), and 198 to 260 (IGTY…NLDV). ADP-binding positions include R70, 85–90 (MLTITD), V130, 151–152 (HR), and K170. Residues R70, 85–90 (MLTITD), V130, H151, 151–152 (HR), K170, T200, A205, 226–227 (SA), and 242–245 (SKFD) contribute to the AMP site. ATP is bound by residues R70, 85–90 (MLTITD), V130, 151–152 (HR), R152, and K170. Positions 138 to 159 (LFDAVSSLIRNKIHRLPVIDPE) match the AMPK pseudosubstrate motif. 242-245 (SKFD) contacts ADP. 242-245 (SKFD) contacts ATP. Phosphoserine; by ULK1 is present on S261. T263 is modified (phosphothreonine; by ULK1). R269 serves as a coordination point for ADP. R269 contributes to the AMP binding site. R269 is a binding site for ATP. Position 270 is a phosphoserine; by ULK1 (S270). In terms of domain architecture, CBS 4 spans 272-329 (YFEGVLKCYLHETLETIINRLVEAEVHRLVVVDENDVVKGIVSLSDILQALVLTGGEK). ADP is bound by residues L277 and 298–299 (HR). AMP is bound by residues L277, H298, 298 to 299 (HR), and 314 to 317 (SLSD). Residues L277 and 298 to 299 (HR) each bind ATP.

The protein belongs to the 5'-AMP-activated protein kinase gamma subunit family. In terms of assembly, AMPK is a heterotrimer of an alpha catalytic subunit (PRKAA1 or PRKAA2), a beta (PRKAB1 or PRKAB2) and a gamma non-catalytic subunits (PRKAG1, PRKAG2 or PRKAG3). Interacts with FNIP1 and FNIP2. In terms of processing, phosphorylated by ULK1 and ULK2; leading to negatively regulate AMPK activity and suggesting the existence of a regulatory feedback loop between ULK1, ULK2 and AMPK. Glycosylated; O-GlcNAcylated by OGT, promoting the AMP-activated protein kinase (AMPK) activity.

In terms of biological role, AMP/ATP-binding subunit of AMP-activated protein kinase (AMPK), an energy sensor protein kinase that plays a key role in regulating cellular energy metabolism. In response to reduction of intracellular ATP levels, AMPK activates energy-producing pathways and inhibits energy-consuming processes: inhibits protein, carbohydrate and lipid biosynthesis, as well as cell growth and proliferation. AMPK acts via direct phosphorylation of metabolic enzymes, and by longer-term effects via phosphorylation of transcription regulators. Also acts as a regulator of cellular polarity by remodeling the actin cytoskeleton; probably by indirectly activating myosin. Gamma non-catalytic subunit mediates binding to AMP, ADP and ATP, leading to activate or inhibit AMPK: AMP-binding results in allosteric activation of alpha catalytic subunit (PRKAA1 or PRKAA2) both by inducing phosphorylation and preventing dephosphorylation of catalytic subunits. ADP also stimulates phosphorylation, without stimulating already phosphorylated catalytic subunit. ATP promotes dephosphorylation of catalytic subunit, rendering the AMPK enzyme inactive. In Bos taurus (Bovine), this protein is 5'-AMP-activated protein kinase subunit gamma-1 (PRKAG1).